Consider the following 174-residue polypeptide: uncharacterized protein (174 aa).

The disordered stretch occupies residues 1 to 55 (MGCVVSKSDDIKNENESRQRNQASSSQQPSSSQTPSKQIGIAAKDSEEQPQEVSY). The N-myristoyl glycine moiety is linked to residue Gly2. The span at 7-19 (KSDDIKNENESRQ) shows a compositional bias: basic and acidic residues. The segment covering 20–38 (RNQASSSQQPSSSQTPSKQ) has biased composition (low complexity).

This is an uncharacterized protein from Dictyostelium discoideum (Social amoeba).